Here is an 82-residue protein sequence, read N- to C-terminus: Defensin-like protein 22 (82 aa).

An N-terminal signal peptide occupies residues 1-24 (MAGLKVFSFALLLILTFSLIDVEG). Intrachain disulfides connect cysteine 34/cysteine 82, cysteine 44/cysteine 69, cysteine 53/cysteine 78, and cysteine 57/cysteine 80.

It belongs to the DEFL family.

Its subcellular location is the secreted. The chain is Defensin-like protein 22 from Arabidopsis thaliana (Mouse-ear cress).